The sequence spans 110 residues: MEAIAKHRFARISPQKARLVADQLRGKPVAQALEILNFSNKKAAELIKKVLESAIANAEHNEGADIDDLNVAKIFVDEGPTMKRIMPRAKGRADRILKRSSHITVVVADR.

The protein belongs to the universal ribosomal protein uL22 family. In terms of assembly, part of the 50S ribosomal subunit.

Its function is as follows. This protein binds specifically to 23S rRNA; its binding is stimulated by other ribosomal proteins, e.g. L4, L17, and L20. It is important during the early stages of 50S assembly. It makes multiple contacts with different domains of the 23S rRNA in the assembled 50S subunit and ribosome. The globular domain of the protein is located near the polypeptide exit tunnel on the outside of the subunit, while an extended beta-hairpin is found that lines the wall of the exit tunnel in the center of the 70S ribosome. This Photobacterium profundum (strain SS9) protein is Large ribosomal subunit protein uL22.